The sequence spans 81 residues: Costars family protein ABRACL (81 aa).

Met-1 carries the N-acetylmethionine modification.

It belongs to the costars family.

The polypeptide is Costars family protein ABRACL (ABRACL) (Bos taurus (Bovine)).